The primary structure comprises 305 residues: Porphobilinogen deaminase (305 aa).

At Cys241 the chain carries S-(dipyrrolylmethanemethyl)cysteine.

Belongs to the HMBS family. As to quaternary structure, monomer. Dipyrromethane is required as a cofactor.

It catalyses the reaction 4 porphobilinogen + H2O = hydroxymethylbilane + 4 NH4(+). It participates in porphyrin-containing compound metabolism; protoporphyrin-IX biosynthesis; coproporphyrinogen-III from 5-aminolevulinate: step 2/4. Functionally, tetrapolymerization of the monopyrrole PBG into the hydroxymethylbilane pre-uroporphyrinogen in several discrete steps. The chain is Porphobilinogen deaminase from Exiguobacterium sp. (strain ATCC BAA-1283 / AT1b).